We begin with the raw amino-acid sequence, 193 residues long: Orotate phosphoribosyltransferase (193 aa).

Residues arginine 85, lysine 89, histidine 91, and 111–119 (DDVLTTGKS) contribute to the 5-phospho-alpha-D-ribose 1-diphosphate site. The orotate site is built by threonine 115 and arginine 143.

It belongs to the purine/pyrimidine phosphoribosyltransferase family. PyrE subfamily. As to quaternary structure, homodimer. Mg(2+) serves as cofactor.

The enzyme catalyses orotidine 5'-phosphate + diphosphate = orotate + 5-phospho-alpha-D-ribose 1-diphosphate. The protein operates within pyrimidine metabolism; UMP biosynthesis via de novo pathway; UMP from orotate: step 1/2. Catalyzes the transfer of a ribosyl phosphate group from 5-phosphoribose 1-diphosphate to orotate, leading to the formation of orotidine monophosphate (OMP). The sequence is that of Orotate phosphoribosyltransferase from Pyrobaculum islandicum (strain DSM 4184 / JCM 9189 / GEO3).